Reading from the N-terminus, the 207-residue chain is ATP-dependent Clp protease proteolytic subunit (207 aa).

S111 acts as the Nucleophile in catalysis. The active site involves H136.

This sequence belongs to the peptidase S14 family. As to quaternary structure, fourteen ClpP subunits assemble into 2 heptameric rings which stack back to back to give a disk-like structure with a central cavity, resembling the structure of eukaryotic proteasomes.

It is found in the cytoplasm. It carries out the reaction Hydrolysis of proteins to small peptides in the presence of ATP and magnesium. alpha-casein is the usual test substrate. In the absence of ATP, only oligopeptides shorter than five residues are hydrolyzed (such as succinyl-Leu-Tyr-|-NHMec, and Leu-Tyr-Leu-|-Tyr-Trp, in which cleavage of the -Tyr-|-Leu- and -Tyr-|-Trp bonds also occurs).. Its function is as follows. Cleaves peptides in various proteins in a process that requires ATP hydrolysis. Has a chymotrypsin-like activity. Plays a major role in the degradation of misfolded proteins. The polypeptide is ATP-dependent Clp protease proteolytic subunit (Photorhabdus laumondii subsp. laumondii (strain DSM 15139 / CIP 105565 / TT01) (Photorhabdus luminescens subsp. laumondii)).